Here is a 38-residue protein sequence, read N- to C-terminus: IFINVKCSSPQQCLKPCKAAFGISAGGKCINGKCKCYP.

Intrachain disulfides connect Cys7-Cys29, Cys13-Cys34, and Cys17-Cys36.

Belongs to the short scorpion toxin superfamily. Potassium channel inhibitor family. Alpha-KTx 02 subfamily. As to expression, expressed by the venom gland.

The protein resides in the secreted. Its function is as follows. Selective inhibitor of voltage-gated potassium channels, blocks the Kv1.2/KCNA2 (Kd=1.3 nM) and Kv1.3/KCNA3 (Kd=7.2 nM) channels. Association and dissociation rates of the toxin are slower for Kv1.2/KCNA2 than for Kv1.3/KCNA3. The sequence is that of Potassium channel toxin alpha-KTx 2.13 from Centruroides suffusus (Durango bark scorpion).